The sequence spans 434 residues: Innexin-14 (434 aa).

4 helical membrane passes run 30–50 (LFTV…QHFG), 106–126 (WVPF…WCWA), 301–321 (IFIG…IGTV), and 365–385 (YLCA…GFLK).

This sequence belongs to the pannexin family.

The protein localises to the cell membrane. The protein resides in the cell junction. Its subcellular location is the gap junction. Structural component of the gap junctions. The sequence is that of Innexin-14 (inx-14) from Caenorhabditis elegans.